Here is a 122-residue protein sequence, read N- to C-terminus: Large ribosomal subunit protein uL14 (122 aa).

It belongs to the universal ribosomal protein uL14 family. As to quaternary structure, part of the 50S ribosomal subunit. Forms a cluster with proteins L3 and L19. In the 70S ribosome, L14 and L19 interact and together make contacts with the 16S rRNA in bridges B5 and B8.

Functionally, binds to 23S rRNA. Forms part of two intersubunit bridges in the 70S ribosome. This chain is Large ribosomal subunit protein uL14, found in Helicobacter acinonychis (strain Sheeba).